The sequence spans 300 residues: Aspartate carbamoyltransferase catalytic subunit (300 aa).

Carbamoyl phosphate-binding residues include R50 and T51. L-aspartate is bound at residue K78. Carbamoyl phosphate-binding residues include R100, H127, and Q130. The L-aspartate site is built by R160 and R210. Positions 253 and 254 each coordinate carbamoyl phosphate.

Belongs to the aspartate/ornithine carbamoyltransferase superfamily. ATCase family. In terms of assembly, heterododecamer (2C3:3R2) of six catalytic PyrB chains organized as two trimers (C3), and six regulatory PyrI chains organized as three dimers (R2).

It catalyses the reaction carbamoyl phosphate + L-aspartate = N-carbamoyl-L-aspartate + phosphate + H(+). The protein operates within pyrimidine metabolism; UMP biosynthesis via de novo pathway; (S)-dihydroorotate from bicarbonate: step 2/3. Catalyzes the condensation of carbamoyl phosphate and aspartate to form carbamoyl aspartate and inorganic phosphate, the committed step in the de novo pyrimidine nucleotide biosynthesis pathway. This Staphylococcus saprophyticus subsp. saprophyticus (strain ATCC 15305 / DSM 20229 / NCIMB 8711 / NCTC 7292 / S-41) protein is Aspartate carbamoyltransferase catalytic subunit.